The chain runs to 129 residues: NADPH-dependent 7-cyano-7-deazaguanine reductase (129 aa).

Catalysis depends on Cys-34, which acts as the Thioimide intermediate. Catalysis depends on Asp-41, which acts as the Proton donor. Substrate is bound by residues 56 to 58 (VEL) and 75 to 76 (HE).

Belongs to the GTP cyclohydrolase I family. QueF type 1 subfamily.

It localises to the cytoplasm. The enzyme catalyses 7-aminomethyl-7-carbaguanine + 2 NADP(+) = 7-cyano-7-deazaguanine + 2 NADPH + 3 H(+). Its pathway is tRNA modification; tRNA-queuosine biosynthesis. In terms of biological role, catalyzes the NADPH-dependent reduction of 7-cyano-7-deazaguanine (preQ0) to 7-aminomethyl-7-deazaguanine (preQ1). The protein is NADPH-dependent 7-cyano-7-deazaguanine reductase of Nitrosococcus oceani (strain ATCC 19707 / BCRC 17464 / JCM 30415 / NCIMB 11848 / C-107).